The sequence spans 259 residues: PKHD-type hydroxylase PsycPRwf_1523 (259 aa).

One can recognise a Fe2OG dioxygenase domain in the interval 80-180; the sequence is VIMPPLFSAY…RLAMVTWVQS (101 aa). Fe cation-binding residues include H98, D100, and H161. Residue R171 coordinates 2-oxoglutarate.

Fe(2+) is required as a cofactor. It depends on L-ascorbate as a cofactor.

The sequence is that of PKHD-type hydroxylase PsycPRwf_1523 from Psychrobacter sp. (strain PRwf-1).